Here is a 509-residue protein sequence, read N- to C-terminus: Maturase K (509 aa).

Belongs to the intron maturase 2 family. MatK subfamily.

Its subcellular location is the plastid. It is found in the chloroplast. In terms of biological role, usually encoded in the trnK tRNA gene intron. Probably assists in splicing its own and other chloroplast group II introns. The polypeptide is Maturase K (Nicotiana glutinosa (Tobacco)).